The following is a 1036-amino-acid chain: Protein P200 (1036 aa).

Residues E697–T727 are disordered. Residues P707–T727 show a composition bias toward acidic residues. 3 consecutive repeat copies span residues E718–F723, E738–F743, and E776–F781. Positions E718 to F781 are 3 X 6 AA repeats of E-P-E-P-N-F. 2 disordered regions span residues F757 to E784 and E798 to A845. The segment covering F773–E784 has biased composition (acidic residues).

It is found in the cell projection. The protein localises to the attachment organelle. Its function is as follows. Protein cytoskeleton-associated which plays a role in gliding motility and perhaps also in mucociliary clearance. This chain is Protein P200 (p200), found in Mycoplasma pneumoniae (strain ATCC 29342 / M129 / Subtype 1) (Mycoplasmoides pneumoniae).